Here is a 738-residue protein sequence, read N- to C-terminus: Alanine--tRNA ligase (738 aa).

Zn(2+) contacts are provided by histidine 564, histidine 568, cysteine 666, and histidine 670.

It belongs to the class-II aminoacyl-tRNA synthetase family. Homotetramer. Zn(2+) serves as cofactor.

It localises to the cytoplasm. It catalyses the reaction tRNA(Ala) + L-alanine + ATP = L-alanyl-tRNA(Ala) + AMP + diphosphate. Catalyzes the attachment of alanine to tRNA(Ala) in a two-step reaction: alanine is first activated by ATP to form Ala-AMP and then transferred to the acceptor end of tRNA(Ala). Also edits incorrectly charged Ser-tRNA(Ala) and Gly-tRNA(Ala) via its editing domain. In Yersinia pestis bv. Antiqua (strain Antiqua), this protein is Alanine--tRNA ligase (alaS).